A 445-amino-acid polypeptide reads, in one-letter code: MREIVHLQAGQCGNQIGAKFWEVISDEHGIDPTGTYHGDSDLQLERINVYYNEATGGKYVPRAVLVDLEPGTMDSVRSGPFGQIFRPDNFVFGQSGAGNNWAKGHYTEGAELVDSVLDVVRKEAESCDCLQGFQLTHSLGGGTGSGMGTLLISKIREEYPDRIMNTFSVVPSPKVSDTVVEPYNATLSVHQLVENTDETYCIDNEALYDICFRTLKLTTPTYGDLNHLVSATMSGVTACLRFPGQLNADLRKLAVNMVPFPRLHFFMPGFAPLTSRGSQQYRALTVPELTQQMFDAKNMMAACDPRHGRYLTVAAVFRGRMSMKEVDEQMLNVQNKNSSYFVEWIPNNVKTAVCDIPPRGLKMSATFIGNSTAIQELFKRISEQFTAMFRRKAFLHWYTGEGMDEMEFTEAESNMNDLVSEYQQYQDATAEEEGEFEEEAEEEVA.

Positions 1–4 (MREI) match the MREI motif motif. Residue Gln-11 coordinates GTP. At Thr-55 the chain carries Phosphothreonine. Lys-58 carries the N6-acetyllysine modification. Positions 69, 138, 142, 143, and 144 each coordinate GTP. Glu-69 contributes to the Mg(2+) binding site. Ser-172 carries the phosphoserine; by CDK1 modification. The GTP site is built by Asn-204 and Asn-226. Positions 426–445 (QDATAEEEGEFEEEAEEEVA) are disordered. Positions 429–445 (TAEEEGEFEEEAEEEVA) are enriched in acidic residues. Position 438 is a 5-glutamyl polyglutamate (Glu-438).

The protein belongs to the tubulin family. Dimer of alpha and beta chains. A typical microtubule is a hollow water-filled tube with an outer diameter of 25 nm and an inner diameter of 15 nM. Alpha-beta heterodimers associate head-to-tail to form protofilaments running lengthwise along the microtubule wall with the beta-tubulin subunit facing the microtubule plus end conferring a structural polarity. Microtubules usually have 13 protofilaments but different protofilament numbers can be found in some organisms and specialized cells. Component of sperm flagellar doublet microtubules. Requires Mg(2+) as cofactor. Some glutamate residues at the C-terminus are polyglycylated, resulting in polyglycine chains on the gamma-carboxyl group. Glycylation is mainly limited to tubulin incorporated into axonemes (cilia and flagella) whereas glutamylation is prevalent in neuronal cells, centrioles, axonemes, and the mitotic spindle. Both modifications can coexist on the same protein on adjacent residues, and lowering polyglycylation levels increases polyglutamylation, and reciprocally. Cilia and flagella glycylation is required for their stability and maintenance. Flagella glycylation controls sperm motility. Post-translationally, some glutamate residues at the C-terminus are polyglutamylated, resulting in polyglutamate chains on the gamma-carboxyl group. Polyglutamylation plays a key role in microtubule severing by spastin (SPAST). SPAST preferentially recognizes and acts on microtubules decorated with short polyglutamate tails: severing activity by SPAST increases as the number of glutamates per tubulin rises from one to eight, but decreases beyond this glutamylation threshold. Glutamylation is also involved in cilia motility. In terms of processing, phosphorylated on Ser-172 by CDK1 during the cell cycle, from metaphase to telophase, but not in interphase. This phosphorylation inhibits tubulin incorporation into microtubules.

Its subcellular location is the cytoplasm. It localises to the cytoskeleton. The protein localises to the flagellum axoneme. In terms of biological role, tubulin is the major constituent of microtubules, a cylinder consisting of laterally associated linear protofilaments composed of alpha- and beta-tubulin heterodimers. Microtubules grow by the addition of GTP-tubulin dimers to the microtubule end, where a stabilizing cap forms. Below the cap, tubulin dimers are in GDP-bound state, owing to GTPase activity of alpha-tubulin. In Rattus norvegicus (Rat), this protein is Tubulin beta-4B chain (Tubb4b).